The chain runs to 687 residues: Glycine--tRNA ligase beta subunit (687 aa).

This sequence belongs to the class-II aminoacyl-tRNA synthetase family. Tetramer of two alpha and two beta subunits.

The protein localises to the cytoplasm. The catalysed reaction is tRNA(Gly) + glycine + ATP = glycyl-tRNA(Gly) + AMP + diphosphate. In Neisseria meningitidis serogroup B (strain ATCC BAA-335 / MC58), this protein is Glycine--tRNA ligase beta subunit.